Here is a 320-residue protein sequence, read N- to C-terminus: Fructose-1,6-bisphosphatase class 1 (320 aa).

4 residues coordinate Mg(2+): Glu105, Asp124, Leu126, and Asp127. Substrate contacts are provided by residues 127-130, Tyr233, and Lys263; that span reads DGSS. Glu269 contributes to the Mg(2+) binding site.

It belongs to the FBPase class 1 family. As to quaternary structure, homotetramer. Requires Mg(2+) as cofactor.

It is found in the cytoplasm. The enzyme catalyses beta-D-fructose 1,6-bisphosphate + H2O = beta-D-fructose 6-phosphate + phosphate. Its pathway is carbohydrate biosynthesis; gluconeogenesis. This is Fructose-1,6-bisphosphatase class 1 from Methanocorpusculum labreanum (strain ATCC 43576 / DSM 4855 / Z).